We begin with the raw amino-acid sequence, 225 residues long: Fibronectin type III domain-containing protein 10 (225 aa).

Positions 1–19 are cleaved as a signal peptide; it reads MRAPPLLLLLAACAPPSGA. At 20–181 the chain is on the extracellular side; the sequence is AVDPTPPGWE…FTAEPAAMQE (162 aa). A Fibronectin type-III domain is found at 72–167; that stretch reads LASAGGSLRA…ELAAAPPELA (96 aa). N-linked (GlcNAc...) asparagine glycosylation is found at Asn-86 and Asn-109. A helical membrane pass occupies residues 182–202; the sequence is IVVAMTAVGGSICVMLVVICL. Residues 203 to 225 are Cytoplasmic-facing; the sequence is LVAYITENLMHPTFRRPSLRRQP.

Its subcellular location is the membrane. In Rattus norvegicus (Rat), this protein is Fibronectin type III domain-containing protein 10 (Fndc10).